Here is a 177-residue protein sequence, read N- to C-terminus: MLDAFSRVVVNSDAKAAYVGGSDLQALKKFIADGNKRLDSVNAIVSNASCIVSDAVSGMICENPGLIAPGGNCYTNRRMAACLRDGEIILRYVSYALLAGDPSVLEDRCLNGLKETYIALGVPTNSSVRAVSIMKASAVAFITNTASQRKMATADGDCSALASEVASYCDRVAAAIS.

2 residues coordinate phycourobilin: cysteine 50 and cysteine 61. At asparagine 72 the chain carries N4-methylasparagine. Cysteine 82 and cysteine 158 together coordinate (2R,3E)-phycoerythrobilin.

The protein belongs to the phycobiliprotein family. As to quaternary structure, heterodimer of an alpha and a beta chain. Post-translationally, contains two covalently linked phycoerythrobilin chromophores and one covalently linked phycourobilin chromophore.

Its subcellular location is the plastid. It is found in the chloroplast thylakoid membrane. Its function is as follows. Light-harvesting photosynthetic bile pigment-protein from the phycobiliprotein complex. This Porphyra purpurea (Red seaweed) protein is R-phycoerythrin beta chain (cpeB).